Reading from the N-terminus, the 160-residue chain is Putative 4-hydroxy-4-methyl-2-oxoglutarate aldolase (160 aa).

Substrate-binding positions include 75–78 (GDQL) and arginine 97. Aspartate 98 contributes to the a divalent metal cation binding site.

This sequence belongs to the class II aldolase/RraA-like family. In terms of assembly, homotrimer. Requires a divalent metal cation as cofactor.

It catalyses the reaction 4-hydroxy-4-methyl-2-oxoglutarate = 2 pyruvate. The enzyme catalyses oxaloacetate + H(+) = pyruvate + CO2. Catalyzes the aldol cleavage of 4-hydroxy-4-methyl-2-oxoglutarate (HMG) into 2 molecules of pyruvate. Also contains a secondary oxaloacetate (OAA) decarboxylase activity due to the common pyruvate enolate transition state formed following C-C bond cleavage in the retro-aldol and decarboxylation reactions. The protein is Putative 4-hydroxy-4-methyl-2-oxoglutarate aldolase of Vibrio parahaemolyticus serotype O3:K6 (strain RIMD 2210633).